A 167-amino-acid polypeptide reads, in one-letter code: Alanine- and arginine-rich domain-containing protein (167 aa).

Residues L140 to A167 are disordered.

In terms of tissue distribution, preferentially expressed in testis both in embryo and adult. Expressed at much lower level in other tissues.

This chain is Alanine- and arginine-rich domain-containing protein (Aard), found in Mus musculus (Mouse).